A 583-amino-acid chain; its full sequence is Multidrug transporter QDR2 (583 aa).

The disordered stretch occupies residues 23-46; it reads EKYDGPDLSEVDSEDNDKMIKTNE. N-linked (GlcNAc...) asparagine glycosylation is present at asparagine 60. The helical transmembrane segment at 88–108 threads the bilayer; sequence AYTGLFSTMAGAIYYPVLSVI. Asparagine 120 carries N-linked (GlcNAc...) asparagine glycosylation. 5 consecutive transmembrane segments (helical) span residues 121 to 141, 148 to 168, 178 to 198, 208 to 228, and 238 to 258; these read ITVV…GGLA, PVVL…ACAQ, CLQA…IGDV, VGYI…IGAG, and IFWF…IMLP. The N-linked (GlcNAc...) asparagine glycan is linked to asparagine 267. A run of 2 helical transmembrane segments spans residues 323 to 342 and 354 to 374; these read ILLV…QTAL and VAKI…SIVT. N-linked (GlcNAc...) asparagine glycosylation is present at asparagine 380. 4 consecutive transmembrane segments (helical) span residues 432–452, 458–478, 493–513, and 524–544; these read HAAF…GWCI, LASV…ILTF, TATG…IGCL, and GVFT…FYLL.

The protein belongs to the major facilitator superfamily. CAR1 family.

It localises to the cell membrane. Functionally, multidrug resistance transporter involved in resistance to the antifungal drugs miconazole, tioconazole, clotrimazole, and ketoconazole; as well as to quinidine. Decreases the intracellular accumulation of clotrimazole in and plays a role in the extrusion of this antifungal from preloaded cells. This chain is Multidrug transporter QDR2, found in Candida glabrata (strain ATCC 2001 / BCRC 20586 / JCM 3761 / NBRC 0622 / NRRL Y-65 / CBS 138) (Yeast).